A 231-amino-acid chain; its full sequence is Uracil-DNA glycosylase (231 aa).

The active-site Proton acceptor is the aspartate 74.

Belongs to the uracil-DNA glycosylase (UDG) superfamily. UNG family.

It localises to the cytoplasm. The catalysed reaction is Hydrolyzes single-stranded DNA or mismatched double-stranded DNA and polynucleotides, releasing free uracil.. In terms of biological role, excises uracil residues from the DNA which can arise as a result of misincorporation of dUMP residues by DNA polymerase or due to deamination of cytosine. This chain is Uracil-DNA glycosylase, found in Campylobacter jejuni subsp. jejuni serotype O:2 (strain ATCC 700819 / NCTC 11168).